We begin with the raw amino-acid sequence, 47 residues long: Large ribosomal subunit protein bL34 (47 aa).

Residues methionine 1–proline 47 form a disordered region. Positions isoleucine 10–proline 47 are enriched in basic residues.

This sequence belongs to the bacterial ribosomal protein bL34 family.

This is Large ribosomal subunit protein bL34 (rpmH) from Aquifex aeolicus (strain VF5).